A 3856-amino-acid chain; its full sequence is Hybrid PKS-NRPS synthetase traA (3856 aa).

Residues 6 to 438 (PEPIAIVGSG…GTNGHAILEE (433 aa)) form the Ketosynthase family 3 (KS3) domain. Residues C179, H318, and H358 each act as for beta-ketoacyl synthase activity in the active site. The interval 554-885 (IFTGQGAQWA…FSDALGFVWT (332 aa)) is malonyl-CoA:ACP transacylase (MAT) domain. The N-terminal hotdog fold stretch occupies residues 943–1081 (HELLGVPSPN…GKVTVIYGTP (139 aa)). Residues 943–1247 (HELLGVPSPN…LSMKPFSPAT (305 aa)) are dehydratase (DH) domain. Residues 943–1249 (HELLGVPSPN…MKPFSPATAD (307 aa)) enclose the PKS/mFAS DH domain. H975 acts as the Proton acceptor; for dehydratase activity in catalysis. Residues 1096–1249 (MVDIQAEQFY…MKPFSPATAD (154 aa)) form a C-terminal hotdog fold region. The active-site Proton donor; for dehydratase activity is the D1156. The methyltransferase (MT) domain stretch occupies residues 1290-1456 (LACVAQQIVH…RKAGFSGIDS (167 aa)). Positions 1984 to 2158 (TYVLVGLSGR…ATSLDIGSIV (175 aa)) are ketoreductase (KR) domain. In terms of domain architecture, Carrier 1 spans 2266-2347 (ADALEILKEL…TLCQQALEKL (82 aa)). S2307 is modified (O-(pantetheine 4'-phosphoryl)serine). Residues 2351-2422 (ILPNVESGGP…SSTPATVLSN (72 aa)) are disordered. Composition is skewed to low complexity over residues 2357 to 2369 (SGGPSKTGSSKPT) and 2399 to 2418 (TTSPQSTLSSDQSPSSTPAT). The tract at residues 2446–2884 (VKTELVSFQQ…FALFSDKELK (439 aa)) is condensation (C) domain. Positions 2910 to 3310 (QIAKENDDKV…GAMVFHNRIA (401 aa)) are adenylation (A) domain. Residues 3403-3429 (SKTDRKALKELPLPQRSNHDTGDNTES) form a disordered region. The 80-residue stretch at 3428-3507 (ESLTETMLEL…DMTQKIEESL (80 aa)) folds into the Carrier 2 domain. An O-(pantetheine 4'-phosphoryl)serine modification is found at S3467. The tract at residues 3544–3768 (VTGSGGFLGK…EMTPIHSAAS (225 aa)) is reductase (R) domain.

This sequence in the C-terminal section; belongs to the NRP synthetase family.

Its pathway is secondary metabolite biosynthesis. Hybrid PKS-NRPS synthetase; part of the tra gene cluster that produces terrestric acid. The clavatol biosynthesis cluster cla and the terrestric acid cluster tra are both involved in the production of peniphenones and penilactones. The non-reducing PKS claF is responsible for the formation of clavatol from successive condensations of 3 malonyl-CoA units, presumably with a simple acetyl-CoA starter unit, and 2 methylation steps. The esterase claE probably collaborates with claF by catalyzing the hydrolysis of ACP-bound acyl intermediates to free the ACP from stalled intermediates. The clavatol oxidase claD then converts clavatol to hydroxyclavatol. Spontaneous dehydration of hydroxyclavatol leads to the accumulation of the highly active ortho-quinone methide. On the other hand, the PKS-NRPS hybrid traA is involved in the formation of crustosic acid, with the help of traB and traD. The polyketide synthase module (PKS) of traA is responsible for the synthesis of the polyketide backbone via the condensation of an acetyl-CoA starter unit with 3 malonyl-CoA units. The downstream nonribosomal peptide synthetase (NRPS) module then amidates the carboxyl end of the polyketide with L-malic acid. Because traA lacks a designated enoylreductase (ER) domain, the required activity is provided the enoyl reductase traG. Crustosic acid undergoes decarboxylation and isomerization to the terrestric acid, catalyzed by the 2-oxoglutarate-dependent dioxygenase traH. Both acids are further converted to the 2 gamma-butyrolactones (R)-5-methyltetronic acid and (S)-5-carboxylmethyltetronic acid, with involvement of the cytochrome P450 monooxygenase claJ. Spontaneous addition of the methide to these gamma-butyrolactones leads to peniphenone D and penilactone D, which undergo again stereospecific attacking by methide to give penilactones A and B. The polypeptide is Hybrid PKS-NRPS synthetase traA (Penicillium crustosum (Blue mold fungus)).